Consider the following 450-residue polypeptide: Phosphoglucosamine mutase (450 aa).

The active-site Phosphoserine intermediate is the Ser-101. Residues Ser-101, Asp-241, Asp-243, and Asp-245 each contribute to the Mg(2+) site. The residue at position 101 (Ser-101) is a Phosphoserine.

It belongs to the phosphohexose mutase family. Requires Mg(2+) as cofactor. Post-translationally, activated by phosphorylation.

The catalysed reaction is alpha-D-glucosamine 1-phosphate = D-glucosamine 6-phosphate. Catalyzes the conversion of glucosamine-6-phosphate to glucosamine-1-phosphate. The polypeptide is Phosphoglucosamine mutase (Listeria monocytogenes serovar 1/2a (strain ATCC BAA-679 / EGD-e)).